Reading from the N-terminus, the 591-residue chain is Paralemmin-3 (591 aa).

4 consecutive repeats follow at residues 171 to 174, 183 to 186, 224 to 227, and 234 to 237; these read EKNK, EKNQ, and KNQD. The span at 282-293 shows a compositional bias: polar residues; that stretch reads DQTQSTSDQNME. 3 disordered regions span residues 282-317, 332-413, and 515-591; these read DQTQ…TKDQ, KGTT…QNQD, and PDLK…CVVM. Basic and acidic residues-rich tracts occupy residues 306 to 317 and 349 to 383; these read SQSEGKIQTKDQ and EPKE…DMDP. Composition is skewed to polar residues over residues 385–413 and 528–542; these read QLST…QNQD and QESS…TIAQ. The segment covering 543 to 554 has biased composition (low complexity); it reads SSSAEGNSSPES. Residues 559-575 are compositionally biased toward polar residues; sequence QKSQGTDSQQGGNTATQ. Positions 579 to 583 match the Nuclear localization signal motif; sequence RRKKK. S-palmitoyl cysteine attachment occurs at residues Cys-585 and Cys-587. Cys-588 carries the cysteine methyl ester modification. Cys-588 carries the S-farnesyl cysteine lipid modification. The propeptide at 589–591 is removed in mature form; that stretch reads VVM.

Belongs to the paralemmin family. In terms of processing, may be phosphorylated during oocyte maturation. Palmitoylated on Cys-585 and Cys-587 and prenylated on Cys-588; which is required for membrane association. In terms of tissue distribution, in Xenopus oocyte, in the central nervous system cells of tadpoles and adult frogs, and transiently in epithelial cells of stomach and gut of tadpoles. Highly expressed in kidney.

Its subcellular location is the cytoplasm. It is found in the nucleus. The protein localises to the cell membrane. Maternal ATP-binding protein that may have multiple functions during development, one of which may be associated with the development and maintenance of the central nervous system. This chain is Paralemmin-3 (palm3), found in Xenopus laevis (African clawed frog).